Reading from the N-terminus, the 321-residue chain is Phospho-N-acetylmuramoyl-pentapeptide-transferase (321 aa).

9 helical membrane passes run 1 to 21 (MSLL…FALM), 53 to 73 (TMGG…VGGW), 77 to 97 (LQPT…LGFW), 110 to 130 (GLKA…LTLV), 145 to 165 (LGVW…LVGF), 174 to 194 (GLDG…AVIA), 200 to 220 (YNVM…FVYN), 226 to 248 (IFMG…ILLH), and 301 to 321 (IDIV…ATII).

This sequence belongs to the glycosyltransferase 4 family. MraY subfamily. Mg(2+) serves as cofactor.

The protein resides in the cell membrane. The catalysed reaction is UDP-N-acetyl-alpha-D-muramoyl-L-alanyl-gamma-D-glutamyl-L-lysyl-D-alanyl-D-alanine + di-trans,octa-cis-undecaprenyl phosphate = Mur2Ac(oyl-L-Ala-gamma-D-Glu-L-Lys-D-Ala-D-Ala)-di-trans,octa-cis-undecaprenyl diphosphate + UMP. It participates in cell wall biogenesis; peptidoglycan biosynthesis. Functionally, catalyzes the initial step of the lipid cycle reactions in the biosynthesis of the cell wall peptidoglycan: transfers peptidoglycan precursor phospho-MurNAc-pentapeptide from UDP-MurNAc-pentapeptide onto the lipid carrier undecaprenyl phosphate, yielding undecaprenyl-pyrophosphoryl-MurNAc-pentapeptide, known as lipid I. The sequence is that of Phospho-N-acetylmuramoyl-pentapeptide-transferase from Lactiplantibacillus plantarum (strain ATCC BAA-793 / NCIMB 8826 / WCFS1) (Lactobacillus plantarum).